The primary structure comprises 175 residues: uncharacterized protein (175 aa).

This is an uncharacterized protein from Escherichia coli.